Here is a 257-residue protein sequence, read N- to C-terminus: MFKRVLLKLSGEFLSGPAPDGSAGFGISPDTTAQLARLITDALTGTNVELAIVIGGGNLWRGARNGKGMDAATADYIGMLGTVMNAMALQDAMEAAGQPTRVMTAIQMAAVAEPYIRRRAIRHLEKGRVVIFGGGNGAPFFTTDTTATLRALEIGADVVLMAKNKVDGVYDSDPRKNPDARRLDSLTHIEVVERRLEVMDATALTLCMDKGLPIVVFDLFQPGNLRRLLEGERVGTLIESERRPERLSHDPSSHVPR.

ATP is bound at residue 8–11 (KLSG). Residues 21-26 (GSAGFG) are involved in allosteric activation by GTP. Gly-56 contributes to the UMP binding site. ATP is bound by residues Gly-57 and Arg-61. Residues Asp-75 and 136–143 (NGAPFFTT) each bind UMP. ATP is bound by residues Asn-164, Tyr-170, and Asp-173.

This sequence belongs to the UMP kinase family. As to quaternary structure, homohexamer.

It localises to the cytoplasm. It carries out the reaction UMP + ATP = UDP + ADP. It participates in pyrimidine metabolism; CTP biosynthesis via de novo pathway; UDP from UMP (UMPK route): step 1/1. Its activity is regulated as follows. Allosterically activated by GTP. Inhibited by UTP. Its function is as follows. Catalyzes the reversible phosphorylation of UMP to UDP. The protein is Uridylate kinase of Deinococcus geothermalis (strain DSM 11300 / CIP 105573 / AG-3a).